The sequence spans 245 residues: Thiopurine S-methyltransferase (245 aa).

Ser14 is subject to Phosphoserine. Residue 29-40 (WQGKWVTGKTIF) participates in S-adenosyl-L-methionine binding. Residue Phe40 participates in substrate binding. Lys58 bears the N6-acetyllysine mark. S-adenosyl-L-methionine is bound by residues Leu69, Glu90, and Arg152.

It belongs to the class I-like SAM-binding methyltransferase superfamily. TPMT family. In terms of assembly, monomer.

It is found in the cytoplasm. It carries out the reaction S-adenosyl-L-methionine + a thiopurine = S-adenosyl-L-homocysteine + a thiopurine S-methylether.. The sequence is that of Thiopurine S-methyltransferase (TPMT) from Equus caballus (Horse).